A 1053-amino-acid chain; its full sequence is Phosphoenolpyruvate carboxylase (1053 aa).

His246 is an active-site residue. Residues Arg461–Pro473 are compositionally biased toward basic and acidic residues. The disordered stretch occupies residues Arg461–Tyr480. Lys699 is a catalytic residue.

The protein belongs to the PEPCase type 1 family. The cofactor is Mg(2+).

The catalysed reaction is oxaloacetate + phosphate = phosphoenolpyruvate + hydrogencarbonate. Functionally, forms oxaloacetate, a four-carbon dicarboxylic acid source for the tricarboxylic acid cycle. In Synechococcus sp. (strain ATCC 27144 / PCC 6301 / SAUG 1402/1) (Anacystis nidulans), this protein is Phosphoenolpyruvate carboxylase (ppc).